The following is a 73-amino-acid chain: N-terminal-borealin-like protein (73 aa).

It belongs to the borealin family. In terms of assembly, component of the aurora kinase complex composed of at least BIR1, BNL1, IPL1 and SLI15.

It is found in the nucleus. Its subcellular location is the cytoplasm. The protein localises to the cytoskeleton. It localises to the spindle. Functionally, component of the aurora kinase complex, also called chromosomal passenger complex (CPC), essential for chromosome segregation and metaphase chromosome alignment. Mediates the SLI15-BIR1 interaction within the CPC. The protein is N-terminal-borealin-like protein (NBL1) of Saccharomyces cerevisiae (strain ATCC 204508 / S288c) (Baker's yeast).